The following is a 361-amino-acid chain: Peptide chain release factor 1 (361 aa).

Gln-237 is subject to N5-methylglutamine. A compositionally biased stretch (basic and acidic residues) spans 287–297 (KQQKEQSDTRK). Positions 287–307 (KQQKEQSDTRKNLVGSGDRSE) are disordered.

This sequence belongs to the prokaryotic/mitochondrial release factor family. Methylated by PrmC. Methylation increases the termination efficiency of RF1.

The protein localises to the cytoplasm. Its function is as follows. Peptide chain release factor 1 directs the termination of translation in response to the peptide chain termination codons UAG and UAA. The protein is Peptide chain release factor 1 of Francisella philomiragia subsp. philomiragia (strain ATCC 25017 / CCUG 19701 / FSC 153 / O#319-036).